The primary structure comprises 62 residues: Fungus-induced protein 1 (62 aa).

The N-terminal stretch at 1–22 is a signal peptide; sequence MSQNLFQILLIFAILAALQVQG.

This Caenorhabditis briggsae protein is Fungus-induced protein 1.